Reading from the N-terminus, the 337-residue chain is Diacylglycerol O-acyltransferase 2-like protein 6 (337 aa).

A run of 2 helical transmembrane segments spans residues 22-42 and 102-122; these read IPVY…LLLF and YIIL…NFAT.

The protein belongs to the diacylglycerol acyltransferase family.

It is found in the endoplasmic reticulum membrane. It carries out the reaction 1,2-di-(9Z-octadecenoyl)-sn-glycerol + (9Z)-octadecenoyl-CoA = 1,2,3-tri-(9Z-octadecenoyl)-glycerol + CoA. In terms of biological role, diglyceride acyltransferase that uses fatty acyl-CoA as substrate. Particularly active with oleate as a substrate. Has no wax synthase activity to produce wax esters. The protein is Diacylglycerol O-acyltransferase 2-like protein 6 (Dgat2l6) of Mus musculus (Mouse).